Here is a 366-residue protein sequence, read N- to C-terminus: Phospho-N-acetylmuramoyl-pentapeptide-transferase (366 aa).

The next 10 membrane-spanning stretches (helical) occupy residues 27 to 47, 71 to 91, 93 to 113, 138 to 158, 174 to 194, 205 to 225, 245 to 265, 268 to 288, 297 to 317, and 343 to 363; these read AALFTSALIVFLFGPAMIASL, TPTMGGLMILTGIVVSSLLWA, LSSIYVVSTLLVTLGFGAIGF, FVIAAVAVFFMMQAALSAGAA, LMLNLGYFFVLFGGFVIVGAG, GLAIVPVMIASAAFGLIAYLA, LAVILGAVIGAGLGFLWFNAP, AIFMGDTGSLALGGLIGTVAV, IIIGGLFVIETLSVIIQVFWF, and QVVIRFWIIAVILAMVGLSTL.

Belongs to the glycosyltransferase 4 family. MraY subfamily. Requires Mg(2+) as cofactor.

It localises to the cell inner membrane. It catalyses the reaction UDP-N-acetyl-alpha-D-muramoyl-L-alanyl-gamma-D-glutamyl-meso-2,6-diaminopimeloyl-D-alanyl-D-alanine + di-trans,octa-cis-undecaprenyl phosphate = di-trans,octa-cis-undecaprenyl diphospho-N-acetyl-alpha-D-muramoyl-L-alanyl-D-glutamyl-meso-2,6-diaminopimeloyl-D-alanyl-D-alanine + UMP. It functions in the pathway cell wall biogenesis; peptidoglycan biosynthesis. Its function is as follows. Catalyzes the initial step of the lipid cycle reactions in the biosynthesis of the cell wall peptidoglycan: transfers peptidoglycan precursor phospho-MurNAc-pentapeptide from UDP-MurNAc-pentapeptide onto the lipid carrier undecaprenyl phosphate, yielding undecaprenyl-pyrophosphoryl-MurNAc-pentapeptide, known as lipid I. The sequence is that of Phospho-N-acetylmuramoyl-pentapeptide-transferase from Rhizobium meliloti (strain 1021) (Ensifer meliloti).